The primary structure comprises 593 residues: BBSome complex member BBS1 (593 aa).

A2 bears the N-acetylalanine mark.

As to quaternary structure, part of BBSome complex, that contains BBS1, BBS2, BBS4, BBS5, BBS7, BBS8/TTC8, BBS9 and BBIP10. Interacts with the C-terminus of RAB3IP. Interacts with CCDC28B and ALDOB. Interacts with PKD1. In terms of tissue distribution, highly expressed in the kidney. Also found in fetal tissue, testis, retina, adipose tissue, heart, skeletal muscle and pancreas.

It localises to the cell projection. It is found in the cilium membrane. The protein resides in the cytoplasm. Its subcellular location is the cytoskeleton. The protein localises to the microtubule organizing center. It localises to the centrosome. It is found in the centriolar satellite. Functionally, the BBSome complex is thought to function as a coat complex required for sorting of specific membrane proteins to the primary cilia. The BBSome complex is required for ciliogenesis but is dispensable for centriolar satellite function. This ciliogenic function is mediated in part by the Rab8 GDP/GTP exchange factor, which localizes to the basal body and contacts the BBSome. Rab8(GTP) enters the primary cilium and promotes extension of the ciliary membrane. Firstly the BBSome associates with the ciliary membrane and binds to RAB3IP/Rabin8, the guanosyl exchange factor (GEF) for Rab8 and then the Rab8-GTP localizes to the cilium and promotes docking and fusion of carrier vesicles to the base of the ciliary membrane. The BBSome complex, together with the LTZL1, controls SMO ciliary trafficking and contributes to the sonic hedgehog (SHH) pathway regulation. Required for proper BBSome complex assembly and its ciliary localization. Plays a role in olfactory cilium biogenesis/maintenance and trafficking. The sequence is that of BBSome complex member BBS1 (BBS1) from Homo sapiens (Human).